The sequence spans 207 residues: MTKKIDSKELPPFEYPQGYQLFAGVDEVGRGPLVGAVVTAAVILDPNNPIEGLTDSKKLTEKKRDLLFPEIQEKALAWSLGRCEAHEIDELNILQATMVAMQRAIAGLKVTPDFALIDGNKVPELPMAGLAVVKGDLRVQEISAASILAKVTRDREMEVLDKEFPQYGFAKHKGYPTKAHFAAIEEHGVISEHRRSFKPVKRVLGIE.

Residues 20–207 (QLFAGVDEVG…KPVKRVLGIE (188 aa)) enclose the RNase H type-2 domain. A divalent metal cation contacts are provided by Asp-26, Glu-27, and Asp-118.

It belongs to the RNase HII family. Requires Mn(2+) as cofactor. Mg(2+) serves as cofactor.

It is found in the cytoplasm. The catalysed reaction is Endonucleolytic cleavage to 5'-phosphomonoester.. In terms of biological role, endonuclease that specifically degrades the RNA of RNA-DNA hybrids. The chain is Ribonuclease HII from Aliivibrio salmonicida (strain LFI1238) (Vibrio salmonicida (strain LFI1238)).